The chain runs to 92 residues: Bombyxin A-6 (92 aa).

Residues 1–19 form the signal peptide; it reads MKILLAIALMLSTVMWVST. The residue at position 20 (Gln20) is a Pyrrolidone carboxylic acid. Disulfide bonds link Cys29/Cys79, Cys41/Cys92, and Cys78/Cys83. Positions 50-70 are cleaved as a propeptide — c peptide like; that stretch reads SGAQFASYGSAWLMPYSEGRG.

Belongs to the insulin family. In terms of assembly, heterodimer of a B chain and an A chain linked by two disulfide bonds.

The protein localises to the secreted. Its function is as follows. Brain peptide responsible for activation of prothoracic glands to produce ecdysone in insects. In Bombyx mori (Silk moth), this protein is Bombyxin A-6 (BBXA6).